Reading from the N-terminus, the 80-residue chain is MARKKASLDFEQSLADLQALVERLENGELSLEESLAAFEQGIALTRDCQGALAQAEQKVQILLERDGELAAQPFDAEPDV.

It belongs to the XseB family. In terms of assembly, heterooligomer composed of large and small subunits.

It is found in the cytoplasm. It catalyses the reaction Exonucleolytic cleavage in either 5'- to 3'- or 3'- to 5'-direction to yield nucleoside 5'-phosphates.. In terms of biological role, bidirectionally degrades single-stranded DNA into large acid-insoluble oligonucleotides, which are then degraded further into small acid-soluble oligonucleotides. The chain is Exodeoxyribonuclease 7 small subunit from Pseudomonas putida (strain GB-1).